The sequence spans 96 residues: Uteroglobin (96 aa).

The signal sequence occupies residues 1 to 21; that stretch reads MKIAITMAVVMLSVCCSSASS.

Belongs to the secretoglobin family. As to quaternary structure, antiparallel homodimer; disulfide-linked. Interaction with LMBR1L is controversial.

The protein resides in the secreted. Binds phosphatidylcholine, phosphatidylinositol, polychlorinated biphenyls (PCB) and weakly progesterone, potent inhibitor of phospholipase A2. The protein is Uteroglobin (SCGB1A1) of Mesocricetus auratus (Golden hamster).